The chain runs to 1006 residues: Serine/threonine-protein phosphatase BSL3 (1006 aa).

A disordered region spans residues 1-67; sequence MDLDSSMVPE…QQQQQPQVTA (67 aa). Composition is skewed to low complexity over residues 38-47 and 54-67; these read SESESASLTP and QQQQQQQQQPQVTA. 5 Kelch repeats span residues 138-184, 242-290, 295-345, 351-398, and 419-465; these read TSAG…VATA, YLMA…TASA, LLLL…VFVN, SGGA…DAAG, and LIFI…TPPG. Disordered regions lie at residues 454-494 and 552-579; these read AAAA…LGSP and GEVELPDRDRGAEATPSGKPSLSLIKPD. Position 616 is a phosphoserine (serine 616). Positions 709, 711, 743, and 775 each coordinate Mn(2+). Histidine 776 (proton donor) is an active-site residue. Positions 828 and 907 each coordinate Mn(2+). A Phosphoserine modification is found at serine 964. The segment at 982-1006 is disordered; that stretch reads NVNRPPTPTRGRPQNPNDRGSLAWI.

Belongs to the PPP phosphatase family. BSU subfamily. It depends on Mn(2+) as a cofactor. Expressed throughout the plant, with a higher level in younger parts.

Its subcellular location is the nucleus. It carries out the reaction O-phospho-L-seryl-[protein] + H2O = L-seryl-[protein] + phosphate. It catalyses the reaction O-phospho-L-threonyl-[protein] + H2O = L-threonyl-[protein] + phosphate. Phosphatase involved in elongation process, probably by acting as a regulator of brassinolide signaling. The sequence is that of Serine/threonine-protein phosphatase BSL3 (BSL3) from Arabidopsis thaliana (Mouse-ear cress).